The chain runs to 458 residues: Phosphomethylpyrimidine synthase (458 aa).

Substrate is bound by residues Asn-80, Met-109, Tyr-139, His-175, 195-197 (SRG), 236-239 (DSLR), and Glu-275. Residue His-279 coordinates Zn(2+). Tyr-302 lines the substrate pocket. Position 343 (His-343) interacts with Zn(2+). [4Fe-4S] cluster contacts are provided by Cys-423, Cys-426, and Cys-431.

This sequence belongs to the ThiC family. [4Fe-4S] cluster serves as cofactor.

It catalyses the reaction 5-amino-1-(5-phospho-beta-D-ribosyl)imidazole + S-adenosyl-L-methionine = 4-amino-2-methyl-5-(phosphooxymethyl)pyrimidine + CO + 5'-deoxyadenosine + formate + L-methionine + 3 H(+). The protein operates within cofactor biosynthesis; thiamine diphosphate biosynthesis. In terms of biological role, catalyzes the synthesis of the hydroxymethylpyrimidine phosphate (HMP-P) moiety of thiamine from aminoimidazole ribotide (AIR) in a radical S-adenosyl-L-methionine (SAM)-dependent reaction. The sequence is that of Phosphomethylpyrimidine synthase from Acaryochloris marina (strain MBIC 11017).